Consider the following 347-residue polypeptide: Quinolinate synthase (347 aa).

The iminosuccinate site is built by histidine 47 and serine 68. Cysteine 113 contacts [4Fe-4S] cluster. Residues 139–141 (YAN) and serine 156 contribute to the iminosuccinate site. Cysteine 200 contributes to the [4Fe-4S] cluster binding site. Residues 226–228 (HPE) and threonine 243 each bind iminosuccinate. Cysteine 297 serves as a coordination point for [4Fe-4S] cluster.

This sequence belongs to the quinolinate synthase family. Type 1 subfamily. The cofactor is [4Fe-4S] cluster.

It localises to the cytoplasm. The catalysed reaction is iminosuccinate + dihydroxyacetone phosphate = quinolinate + phosphate + 2 H2O + H(+). It participates in cofactor biosynthesis; NAD(+) biosynthesis; quinolinate from iminoaspartate: step 1/1. Its function is as follows. Catalyzes the condensation of iminoaspartate with dihydroxyacetone phosphate to form quinolinate. The polypeptide is Quinolinate synthase (Enterobacter sp. (strain 638)).